The primary structure comprises 1160 residues: DNA polymerase III subunit alpha (1160 aa).

It is found in the cytoplasm. It catalyses the reaction DNA(n) + a 2'-deoxyribonucleoside 5'-triphosphate = DNA(n+1) + diphosphate. In terms of biological role, DNA polymerase III is a complex, multichain enzyme responsible for most of the replicative synthesis in bacteria. This DNA polymerase also exhibits 3' to 5' exonuclease activity. The alpha chain is the DNA polymerase. The polypeptide is DNA polymerase III subunit alpha (dnaE) (Escherichia coli O6:H1 (strain CFT073 / ATCC 700928 / UPEC)).